The primary structure comprises 456 residues: Bifunctional protein GlmU (456 aa).

The tract at residues 1–229 is pyrophosphorylase; it reads MSNRPMSVVI…TTETDGVNNR (229 aa). UDP-N-acetyl-alpha-D-glucosamine contacts are provided by residues 11–14, lysine 25, glutamine 76, 81–82, 103–105, glycine 140, glutamate 154, asparagine 169, and asparagine 227; these read LAAG, GT, and YGD. Residue aspartate 105 participates in Mg(2+) binding. Asparagine 227 provides a ligand contact to Mg(2+). Residues 230–250 form a linker region; sequence LQLATLERVYQAEQAEKLLLS. Residues 251–456 are N-acetyltransferase; that stretch reads GVMLQDPARF…ASWQRPQKKK (206 aa). Arginine 333 and lysine 351 together coordinate UDP-N-acetyl-alpha-D-glucosamine. Histidine 363 serves as the catalytic Proton acceptor. Tyrosine 366 and asparagine 377 together coordinate UDP-N-acetyl-alpha-D-glucosamine. Acetyl-CoA-binding positions include alanine 380, 386–387, serine 405, alanine 423, and arginine 440; that span reads NY.

It in the N-terminal section; belongs to the N-acetylglucosamine-1-phosphate uridyltransferase family. This sequence in the C-terminal section; belongs to the transferase hexapeptide repeat family. As to quaternary structure, homotrimer. Requires Mg(2+) as cofactor.

The protein resides in the cytoplasm. The catalysed reaction is alpha-D-glucosamine 1-phosphate + acetyl-CoA = N-acetyl-alpha-D-glucosamine 1-phosphate + CoA + H(+). The enzyme catalyses N-acetyl-alpha-D-glucosamine 1-phosphate + UTP + H(+) = UDP-N-acetyl-alpha-D-glucosamine + diphosphate. It participates in nucleotide-sugar biosynthesis; UDP-N-acetyl-alpha-D-glucosamine biosynthesis; N-acetyl-alpha-D-glucosamine 1-phosphate from alpha-D-glucosamine 6-phosphate (route II): step 2/2. It functions in the pathway nucleotide-sugar biosynthesis; UDP-N-acetyl-alpha-D-glucosamine biosynthesis; UDP-N-acetyl-alpha-D-glucosamine from N-acetyl-alpha-D-glucosamine 1-phosphate: step 1/1. Its pathway is bacterial outer membrane biogenesis; LPS lipid A biosynthesis. Functionally, catalyzes the last two sequential reactions in the de novo biosynthetic pathway for UDP-N-acetylglucosamine (UDP-GlcNAc). The C-terminal domain catalyzes the transfer of acetyl group from acetyl coenzyme A to glucosamine-1-phosphate (GlcN-1-P) to produce N-acetylglucosamine-1-phosphate (GlcNAc-1-P), which is converted into UDP-GlcNAc by the transfer of uridine 5-monophosphate (from uridine 5-triphosphate), a reaction catalyzed by the N-terminal domain. The sequence is that of Bifunctional protein GlmU from Erwinia tasmaniensis (strain DSM 17950 / CFBP 7177 / CIP 109463 / NCPPB 4357 / Et1/99).